The primary structure comprises 217 residues: Ribulose-phosphate 3-epimerase (217 aa).

Position 6 (Ser-6) interacts with substrate. Residues His-29, Asp-31, and His-62 each coordinate a divalent metal cation. Asp-31 acts as the Proton acceptor in catalysis. Substrate contacts are provided by residues His-62, 138-141 (GFGG), 171-173 (DGG), and 193-194 (GS). An a divalent metal cation-binding site is contributed by Asp-171. The active-site Proton donor is Asp-171.

It belongs to the ribulose-phosphate 3-epimerase family. The cofactor is a divalent metal cation.

The enzyme catalyses D-ribulose 5-phosphate = D-xylulose 5-phosphate. It participates in carbohydrate degradation. Functionally, catalyzes the reversible epimerization of D-ribulose 5-phosphate to D-xylulose 5-phosphate. The chain is Ribulose-phosphate 3-epimerase from Helicobacter pylori (strain J99 / ATCC 700824) (Campylobacter pylori J99).